The primary structure comprises 154 residues: Protein X (154 aa).

A mitochondrial targeting sequence region spans residues 68–117 (PCALRFTSARRMETTVNAHQVLPKVLYKRTLGLSAMSTTDLEAYFKDCLF).

Belongs to the orthohepadnavirus protein X family. May form homodimer. May interact with host CEBPA, CFLAR, CREB1, DDB1, E4F1, HBXIP, HSPD1/HSP60, NFKBIA, POLR2E and SMAD4. Interacts with host SMC5-SMC6 complex and induces its degradation. Interacts with host TRPC4AP; leading to prevent ubiquitination of TRPC4AP. Interacts with host PLSCR1; this interaction promotes ubiquitination and degradation of HBx and impairs HBx-mediated cell proliferation. In terms of processing, a fraction may be phosphorylated in insect cells and HepG2 cells, a human hepatoblastoma cell line. Phosphorylated in vitro by host protein kinase C or mitogen-activated protein kinase. N-acetylated in insect cells.

The protein localises to the host cytoplasm. The protein resides in the host nucleus. Its subcellular location is the host mitochondrion. Functionally, multifunctional protein that plays a role in silencing host antiviral defenses and promoting viral transcription. Does not seem to be essential for HBV infection. May be directly involved in development of cirrhosis and liver cancer (hepatocellular carcinoma). Most of cytosolic activities involve modulation of cytosolic calcium. The effect on apoptosis is controversial depending on the cell types in which the studies have been conducted. May induce apoptosis by localizing in mitochondria and causing loss of mitochondrial membrane potential. May also modulate apoptosis by binding host CFLAR, a key regulator of the death-inducing signaling complex (DISC). Promotes viral transcription by using the host E3 ubiquitin ligase DDB1 to target the SMC5-SMC6 complex to proteasomal degradation. This host complex would otherwise bind to viral episomal DNA, and prevents its transcription. Moderately stimulates transcription of many different viral and cellular transcription elements. Promoters and enhancers stimulated by HBx contain DNA binding sites for NF-kappa-B, AP-1, AP-2, c-EBP, ATF/CREB, or the calcium-activated factor NF-AT. This is Protein X from Homo sapiens (Human).